The sequence spans 92 residues: Small ribosomal subunit protein uS19 (92 aa).

It belongs to the universal ribosomal protein uS19 family.

Its function is as follows. Protein S19 forms a complex with S13 that binds strongly to the 16S ribosomal RNA. This Leptospira biflexa serovar Patoc (strain Patoc 1 / Ames) protein is Small ribosomal subunit protein uS19.